Reading from the N-terminus, the 283-residue chain is Glutamate racemase (283 aa).

Substrate is bound by residues 28 to 29 (DS) and 60 to 61 (YG). Cys92 (proton donor/acceptor) is an active-site residue. Residue 93–94 (NT) coordinates substrate. Cys204 functions as the Proton donor/acceptor in the catalytic mechanism. Substrate is bound at residue 205 to 206 (TH).

This sequence belongs to the aspartate/glutamate racemases family.

The catalysed reaction is L-glutamate = D-glutamate. Its pathway is cell wall biogenesis; peptidoglycan biosynthesis. Its function is as follows. Provides the (R)-glutamate required for cell wall biosynthesis. In Salmonella choleraesuis (strain SC-B67), this protein is Glutamate racemase.